We begin with the raw amino-acid sequence, 457 residues long: tRNA modification GTPase MnmE (457 aa).

Arginine 24, glutamate 81, and lysine 121 together coordinate (6S)-5-formyl-5,6,7,8-tetrahydrofolate. The TrmE-type G domain occupies 218-380 (GIKIVITGKP…LLKYLTKIIS (163 aa)). Residue asparagine 228 participates in K(+) binding. Residues 228 to 233 (NVGKSS), 247 to 253 (TNIAGTT), 272 to 275 (DTAG), and 338 to 341 (NKAD) each bind GTP. Serine 232 contributes to the Mg(2+) binding site. Residues threonine 247, isoleucine 249, and threonine 252 each coordinate K(+). Residue threonine 253 coordinates Mg(2+). Position 457 (lysine 457) interacts with (6S)-5-formyl-5,6,7,8-tetrahydrofolate.

This sequence belongs to the TRAFAC class TrmE-Era-EngA-EngB-Septin-like GTPase superfamily. TrmE GTPase family. In terms of assembly, homodimer. Heterotetramer of two MnmE and two MnmG subunits. K(+) is required as a cofactor.

The protein resides in the cytoplasm. Functionally, exhibits a very high intrinsic GTPase hydrolysis rate. Involved in the addition of a carboxymethylaminomethyl (cmnm) group at the wobble position (U34) of certain tRNAs, forming tRNA-cmnm(5)s(2)U34. The protein is tRNA modification GTPase MnmE of Baumannia cicadellinicola subsp. Homalodisca coagulata.